The sequence spans 166 residues: Disulfide bond formation protein B (166 aa).

Topologically, residues 1-10 (MGLNITNRQG) are cytoplasmic. The chain crosses the membrane as a helical span at residues 11–27 (FLLVAAACAGAIGFALF). The Periplasmic segment spans residues 28-45 (AQYQLGEEPCPLCILQRI). A disulfide bond links Cys-37 and Cys-40. Residues 46-62 (GVMAVGALALLAALHNP) form a helical membrane-spanning segment. Over 63 to 69 (GKTGAKV) the chain is Cytoplasmic. Residues 70-86 (WGGLMTLAALSGAGVSL) form a helical membrane-spanning segment. Residues 87–143 (RQLWLQSLPADQVPQCGPGLEFLMESFPLWEVLSKVLKGSGECAAIQGRFLGMTMPF) are Periplasmic-facing. Cysteines 102 and 129 form a disulfide. A helical transmembrane segment spans residues 144 to 162 (WVAVFFAGVIVWTLWLVGR). Residues 163-166 (RRRG) lie on the Cytoplasmic side of the membrane.

This sequence belongs to the DsbB family.

Its subcellular location is the cell inner membrane. Functionally, required for disulfide bond formation in some periplasmic proteins. Acts by oxidizing the DsbA protein. The polypeptide is Disulfide bond formation protein B (Chromobacterium violaceum (strain ATCC 12472 / DSM 30191 / JCM 1249 / CCUG 213 / NBRC 12614 / NCIMB 9131 / NCTC 9757 / MK)).